The following is a 311-amino-acid chain: Dof zinc finger protein DOF1.4 (311 aa).

A compositionally biased stretch (polar residues) spans 1–12; sequence MQSKNMIVASSH. The interval 1–29 is disordered; that stretch reads MQSKNMIVASSHQQQQQQQPQQPQPQLKC. Residues 13 to 26 show a composition bias toward low complexity; it reads QQQQQQQPQQPQPQ. The segment at 27-81 adopts a Dof-type zinc-finger fold; the sequence is LKCPRCDSSNTKFCYYNNYSLSQPRHFCKACKRYWTRGGTLRNVPVGGSYRKNKR. C29, C32, C54, and C57 together coordinate Zn(2+). A disordered region spans residues 72–110; the sequence is VGGSYRKNKRVKRPSTATTTTASTVSTTNSSSPNNPHQI. A compositionally biased stretch (low complexity) spans 85–107; the sequence is PSTATTTTASTVSTTNSSSPNNP.

Its subcellular location is the nucleus. Functionally, transcription factor that binds specifically to a 5'-AA[AG]G-3' consensus core sequence. The sequence is that of Dof zinc finger protein DOF1.4 (DOF1.4) from Arabidopsis thaliana (Mouse-ear cress).